Consider the following 238-residue polypeptide: Octanoyltransferase (238 aa).

Positions 44-224 (AGGPDSLLLL…AVLDALDGRI (181 aa)) constitute a BPL/LPL catalytic domain. Substrate is bound by residues 82–89 (RGGKITWH), 154–156 (AIG), and 167–169 (GFA). Catalysis depends on Cys185, which acts as the Acyl-thioester intermediate.

The protein belongs to the LipB family.

It is found in the cytoplasm. The catalysed reaction is octanoyl-[ACP] + L-lysyl-[protein] = N(6)-octanoyl-L-lysyl-[protein] + holo-[ACP] + H(+). The protein operates within protein modification; protein lipoylation via endogenous pathway; protein N(6)-(lipoyl)lysine from octanoyl-[acyl-carrier-protein]: step 1/2. In terms of biological role, catalyzes the transfer of endogenously produced octanoic acid from octanoyl-acyl-carrier-protein onto the lipoyl domains of lipoate-dependent enzymes. Lipoyl-ACP can also act as a substrate although octanoyl-ACP is likely to be the physiological substrate. The polypeptide is Octanoyltransferase (Mycolicibacterium gilvum (strain PYR-GCK) (Mycobacterium gilvum (strain PYR-GCK))).